Here is a 533-residue protein sequence, read N- to C-terminus: Bifunctional purine biosynthesis protein PurH (533 aa).

The 148-residue stretch at 1–148 folds into the MGS-like domain; sequence MQPNRPIRQA…KNHQDVAIVV (148 aa).

It belongs to the PurH family.

The enzyme catalyses (6R)-10-formyltetrahydrofolate + 5-amino-1-(5-phospho-beta-D-ribosyl)imidazole-4-carboxamide = 5-formamido-1-(5-phospho-D-ribosyl)imidazole-4-carboxamide + (6S)-5,6,7,8-tetrahydrofolate. It catalyses the reaction IMP + H2O = 5-formamido-1-(5-phospho-D-ribosyl)imidazole-4-carboxamide. Its pathway is purine metabolism; IMP biosynthesis via de novo pathway; 5-formamido-1-(5-phospho-D-ribosyl)imidazole-4-carboxamide from 5-amino-1-(5-phospho-D-ribosyl)imidazole-4-carboxamide (10-formyl THF route): step 1/1. It functions in the pathway purine metabolism; IMP biosynthesis via de novo pathway; IMP from 5-formamido-1-(5-phospho-D-ribosyl)imidazole-4-carboxamide: step 1/1. The protein is Bifunctional purine biosynthesis protein PurH of Pasteurella multocida (strain Pm70).